The following is a 437-amino-acid chain: uncharacterized protein (437 aa).

Phosphoserine is present on residues S290 and S293. The residue at position 296 (T296) is a Phosphothreonine. Phosphoserine is present on residues S418 and S428.

This is an uncharacterized protein from Schizosaccharomyces pombe (strain 972 / ATCC 24843) (Fission yeast).